The chain runs to 243 residues: R-spondin-2 (243 aa).

The signal sequence occupies residues Met-1–Cys-21. 11 disulfide bridges follow: Cys-40–Cys-46, Cys-43–Cys-52, Cys-55–Cys-74, Cys-78–Cys-93, Cys-96–Cys-104, Cys-101–Cys-110, Cys-113–Cys-124, Cys-128–Cys-141, Cys-145–Cys-187, Cys-156–Cys-163, and Cys-196–Cys-203. Residues Met-90–Pro-134 form an FU repeat. A TSP type-1 domain is found at Gly-144 to Pro-204. An N-linked (GlcNAc...) asparagine glycan is attached at Asn-160. Positions Pro-204 to Leu-224 are enriched in basic residues. The segment at Pro-204–Gln-243 is disordered.

It belongs to the R-spondin family. Interacts with WNT1. Binds heparin. Interacts with LGR4, LGR5 and LGR6. Interacts with E3 ubiquitin ligases RNF43 and ZNRF3.

Its subcellular location is the secreted. In terms of biological role, activator of the canonical Wnt signaling pathway by acting as a ligand for LGR4-6 receptors. Upon binding to LGR4-6 (LGR4, LGR5 or LGR6), LGR4-6 associate with phosphorylated LRP6 and frizzled receptors that are activated by extracellular Wnt receptors, triggering the canonical Wnt signaling pathway to increase expression of target genes. Also regulates the canonical Wnt/beta-catenin-dependent pathway and non-canonical Wnt signaling by acting as an inhibitor of ZNRF3, an important regulator of the Wnt signaling pathway. During embryonic development, plays a crucial role in limb specification, amplifying the Wnt signaling pathway independently of LGR4-6 receptors, possibly by acting as a direct antagonistic ligand to RNF43 and ZNRF3, hence governing the number of limbs an embryo should form. The protein is R-spondin-2 (RSPO2) of Homo sapiens (Human).